The primary structure comprises 512 residues: Cytochrome P450 monooxygenase hkm5 (512 aa).

Residues 18–38 (LIQLVRALLWVLVITIGGAIV) traverse the membrane as a helical segment. N-linked (GlcNAc...) asparagine glycans are attached at residues asparagine 184, asparagine 263, asparagine 275, asparagine 374, and asparagine 419. Cysteine 456 lines the heme pocket.

Belongs to the cytochrome P450 family. It depends on heme as a cofactor.

The protein localises to the membrane. The catalysed reaction is hancockiamide A + reduced [NADPH--hemoprotein reductase] + O2 = hancockiamide G + oxidized [NADPH--hemoprotein reductase] + 2 H2O + H(+). It catalyses the reaction hancockiamide B + reduced [NADPH--hemoprotein reductase] + O2 = hancockiamide C + oxidized [NADPH--hemoprotein reductase] + 2 H2O + H(+). It carries out the reaction hancockiamide D + reduced [NADPH--hemoprotein reductase] + O2 = hancockiamide H + oxidized [NADPH--hemoprotein reductase] + 2 H2O + H(+). It functions in the pathway secondary metabolite biosynthesis. Cytochrome P450 monooxygenase; part of the gene cluster that mediates the biosynthesis of hancockiamides, an unusual new family of N-cinnamoylated piperazines. The NRPS hkm10 and the NmrA-like reductase hkm9 are proposed to convert two molecules of L-Phe to the intermediary piperazine called xenocockiamide A. Xenocockiamide A is then converted to hancockiamide D via a series of hydroxylations and O-methylations. The tyrosinase hkm6 may catalyze an aromatic hydroxylation, then the 2-oxoglutarate-dependent Fe(II) dioxygenase hkm4 and the FAD-dependent phenol hydroxylase hkm7 may catalyze consecutive hydroxylations to install 2 more hydroxy groups, and the methyltransferase hkm8 probably catalyzes two methylations using 2 molecules of S-adenosyl-L-methionine (SAM). The NRPS hkm11 activates and transfers trans-cinnamate supplied by the PAL hkm12 to hancockiamide D and produces hancockiamide A. NRPS Hkm11 has the flexibility to tolerate the bulky hancockiamide G as a substrate and the absence of the acetyl-transferase hkm3 opens up the opportunity for hkm11 to introduce a second N-cinnamoyl moiety. The cytochrome P450 monooxygenase hkm5 catalyzes the methylenedioxy bridge formation, converting hancockiamide A into hancockiamide G. Hkm5 can also convert hancockiamide B into hancockiamide C, and hancockiamide D into hancockiamide H. The N-acetyltransferase hkm3 finally transfers an acetyl group to 1-N of piperazine, converting hancockiamide A into hancockiamide B and hancockiamide G into hancockiamide C. This Aspergillus hancockii protein is Cytochrome P450 monooxygenase hkm5.